Consider the following 71-residue polypeptide: Large ribosomal subunit protein bL31 (71 aa).

Cys-16, Cys-18, Cys-37, and Cys-40 together coordinate Zn(2+).

Belongs to the bacterial ribosomal protein bL31 family. Type A subfamily. Part of the 50S ribosomal subunit. Requires Zn(2+) as cofactor.

Binds the 23S rRNA. This is Large ribosomal subunit protein bL31 from Pectobacterium atrosepticum (strain SCRI 1043 / ATCC BAA-672) (Erwinia carotovora subsp. atroseptica).